Consider the following 156-residue polypeptide: uncharacterized protein (156 aa).

This is an uncharacterized protein from Escherichia coli (strain K12).